The following is a 411-amino-acid chain: Lissencephaly-1 homolog (411 aa).

The LisH domain occupies 9-41 (QREELNQAIADYLGSNGYADSLETFRKEADLST). A coiled-coil region spans residues 56–83 (TSVIRLQKKVMDLEAKLTEAEKEVIEGA). WD repeat units lie at residues 106 to 147 (GHRA…RSLK), 148 to 187 (GHTDSVQDVAFDAQGKLLASCSADLSIKLWDFQQSYECVK), 191 to 230 (GHDHNVSSVAFVPAGDYVLSASRDRTIKMWEVATGYCVKT), 233 to 272 (GHREWVRMVRVHIEGSIFATCSNDHTIRVWLTNSKDCKVE), 275 to 334 (DHEH…CLLT), 337 to 376 (GHDNWVRGLAFHPGGKYLVSASDDKTIRVWDLRNKRCMKT), and 379 to 411 (AHQHFCTSIDFHKAHPYVISGSVDQSVKVWECR).

This sequence belongs to the WD repeat LIS1/nudF family.

It localises to the cytoplasm. The protein resides in the cytoskeleton. The protein localises to the microtubule organizing center. It is found in the centrosome. Its function is as follows. Positively regulates the activity of the minus-end directed microtubule motor protein dynein. May enhance dynein-mediated microtubule sliding by targeting dynein to the microtubule plus end. Required for several dynein- and microtubule-dependent processes. This is Lissencephaly-1 homolog from Drosophila mojavensis (Fruit fly).